The following is a 109-amino-acid chain: Lipoprotein BsmA (109 aa).

The N-terminal stretch at 1 to 24 (MVSRKRNSVIYRFASLLLVLMLSA) is a signal peptide. Cys25 carries N-palmitoyl cysteine lipidation. A lipid anchor (S-diacylglycerol cysteine) is attached at Cys25.

The protein belongs to the BhsA/McbA family.

It localises to the cell membrane. Functionally, involved in protection of biofilms against oxidative stress. The polypeptide is Lipoprotein BsmA (bsmA) (Escherichia coli (strain K12)).